The sequence spans 591 residues: V-type ATP synthase alpha chain (591 aa).

233–240 is a binding site for ATP; the sequence is GPFGAGKT.

Belongs to the ATPase alpha/beta chains family.

It catalyses the reaction ATP + H2O + 4 H(+)(in) = ADP + phosphate + 5 H(+)(out). In terms of biological role, produces ATP from ADP in the presence of a proton gradient across the membrane. The V-type alpha chain is a catalytic subunit. This Streptococcus pyogenes serotype M2 (strain MGAS10270) protein is V-type ATP synthase alpha chain.